The chain runs to 297 residues: 33 kDa chaperonin (297 aa).

Intrachain disulfides connect C232–C234 and C266–C269.

It belongs to the HSP33 family. In terms of processing, under oxidizing conditions two disulfide bonds are formed involving the reactive cysteines. Under reducing conditions zinc is bound to the reactive cysteines and the protein is inactive.

The protein resides in the cytoplasm. Redox regulated molecular chaperone. Protects both thermally unfolding and oxidatively damaged proteins from irreversible aggregation. Plays an important role in the bacterial defense system toward oxidative stress. The sequence is that of 33 kDa chaperonin from Azotobacter vinelandii (strain DJ / ATCC BAA-1303).